A 511-amino-acid chain; its full sequence is 2-isopropylmalate synthase (511 aa).

Positions 5 to 267 (IQIFDTTLRD…ESQINLEETK (263 aa)) constitute a Pyruvate carboxyltransferase domain. Mn(2+) is bound by residues D14, H202, H204, and N238. Residues 391–511 (QLDNLQLQYV…EYELKEGIRT (121 aa)) are regulatory domain.

It belongs to the alpha-IPM synthase/homocitrate synthase family. LeuA type 1 subfamily. In terms of assembly, homodimer. Requires Mn(2+) as cofactor.

The protein resides in the cytoplasm. It carries out the reaction 3-methyl-2-oxobutanoate + acetyl-CoA + H2O = (2S)-2-isopropylmalate + CoA + H(+). It functions in the pathway amino-acid biosynthesis; L-leucine biosynthesis; L-leucine from 3-methyl-2-oxobutanoate: step 1/4. Catalyzes the condensation of the acetyl group of acetyl-CoA with 3-methyl-2-oxobutanoate (2-ketoisovalerate) to form 3-carboxy-3-hydroxy-4-methylpentanoate (2-isopropylmalate). This Staphylococcus epidermidis (strain ATCC 35984 / DSM 28319 / BCRC 17069 / CCUG 31568 / BM 3577 / RP62A) protein is 2-isopropylmalate synthase.